A 114-amino-acid chain; its full sequence is Small ribosomal subunit protein bS6 (114 aa).

It belongs to the bacterial ribosomal protein bS6 family.

In terms of biological role, binds together with bS18 to 16S ribosomal RNA. This is Small ribosomal subunit protein bS6 from Thermosynechococcus vestitus (strain NIES-2133 / IAM M-273 / BP-1).